The chain runs to 380 residues: Crotonobetainyl-CoA reductase (380 aa).

This sequence belongs to the acyl-CoA dehydrogenase family. Homotetramer. FAD is required as a cofactor.

Its subcellular location is the cytoplasm. The catalysed reaction is 4-(trimethylamino)butanoyl-CoA + oxidized [electron-transfer flavoprotein] + H(+) = crotonobetainyl-CoA + reduced [electron-transfer flavoprotein]. It functions in the pathway amine and polyamine metabolism; carnitine metabolism. Catalyzes the reduction of crotonobetainyl-CoA to gamma-butyrobetainyl-CoA. This Salmonella typhi protein is Crotonobetainyl-CoA reductase.